The primary structure comprises 508 residues: ATP synthase subunit alpha, mitochondrial (508 aa).

171 to 178 (GDRQTGKT) lines the ATP pocket.

This sequence belongs to the ATPase alpha/beta chains family. As to quaternary structure, F-type ATPases have 2 components, CF(1) - the catalytic core - and CF(0) - the membrane proton channel. CF(1) has five subunits: alpha(3), beta(3), gamma(1), delta(1), epsilon(1). CF(0) has three main subunits: a, b and c.

The protein resides in the mitochondrion. The protein localises to the mitochondrion inner membrane. Functionally, mitochondrial membrane ATP synthase (F(1)F(0) ATP synthase or Complex V) produces ATP from ADP in the presence of a proton gradient across the membrane which is generated by electron transport complexes of the respiratory chain. F-type ATPases consist of two structural domains, F(1) - containing the extramembraneous catalytic core, and F(0) - containing the membrane proton channel, linked together by a central stalk and a peripheral stalk. During catalysis, ATP synthesis in the catalytic domain of F(1) is coupled via a rotary mechanism of the central stalk subunits to proton translocation. Subunits alpha and beta form the catalytic core in F(1). Rotation of the central stalk against the surrounding alpha(3)beta(3) subunits leads to hydrolysis of ATP in three separate catalytic sites on the beta subunits. Subunit alpha does not bear the catalytic high-affinity ATP-binding sites. The polypeptide is ATP synthase subunit alpha, mitochondrial (ATPA) (Zea mays (Maize)).